The primary structure comprises 424 residues: Type II methyltransferase M.BspRI (424 aa).

The region spanning Phe58–Tyr408 is the SAM-dependent MTase C5-type domain. Cys156 functions as the S-methylcysteine intermediate in the catalytic mechanism. The residue at position 181 (Cys181) is an S-methylcysteine; by autocatalysis.

Belongs to the class I-like SAM-binding methyltransferase superfamily. C5-methyltransferase family. In terms of assembly, monomer. In the absence of DNA, can self-methylate two cysteine residues.

It catalyses the reaction a 2'-deoxycytidine in DNA + S-adenosyl-L-methionine = a 5-methyl-2'-deoxycytidine in DNA + S-adenosyl-L-homocysteine + H(+). A methylase, recognizes the double-stranded sequence 5'-GGCC-3', methylates C-3 on both strands, and protects the DNA from cleavage by the BspRI endonuclease. This chain is Type II methyltransferase M.BspRI (bspRIM), found in Lysinibacillus sphaericus (Bacillus sphaericus).